The sequence spans 96 residues: Co-chaperonin GroES (96 aa).

Belongs to the GroES chaperonin family. In terms of assembly, heptamer of 7 subunits arranged in a ring. Interacts with the chaperonin GroEL.

The protein localises to the cytoplasm. Functionally, together with the chaperonin GroEL, plays an essential role in assisting protein folding. The GroEL-GroES system forms a nano-cage that allows encapsulation of the non-native substrate proteins and provides a physical environment optimized to promote and accelerate protein folding. GroES binds to the apical surface of the GroEL ring, thereby capping the opening of the GroEL channel. The polypeptide is Co-chaperonin GroES (Shewanella halifaxensis (strain HAW-EB4)).